Here is a 336-residue protein sequence, read N- to C-terminus: DNA-directed RNA polymerase subunit alpha (336 aa).

The interval methionine 1 to proline 235 is alpha N-terminal domain (alpha-NTD). The segment at arginine 264–glutamate 336 is alpha C-terminal domain (alpha-CTD).

This sequence belongs to the RNA polymerase alpha chain family. In terms of assembly, homodimer. The RNAP catalytic core consists of 2 alpha, 1 beta, 1 beta' and 1 omega subunit. When a sigma factor is associated with the core the holoenzyme is formed, which can initiate transcription.

It carries out the reaction RNA(n) + a ribonucleoside 5'-triphosphate = RNA(n+1) + diphosphate. Functionally, DNA-dependent RNA polymerase catalyzes the transcription of DNA into RNA using the four ribonucleoside triphosphates as substrates. This chain is DNA-directed RNA polymerase subunit alpha, found in Thermotoga maritima (strain ATCC 43589 / DSM 3109 / JCM 10099 / NBRC 100826 / MSB8).